An 859-amino-acid chain; its full sequence is Envelope glycoprotein (859 aa).

Residues 1–6 constitute a propeptide that is removed on maturation; that stretch reads MVSIAF. At 7–614 the chain is on the extracellular side; that stretch reads YGGIPGGIST…KDLWSHIGNW (608 aa). Asn40, Asn112, Asn141, Asn148, Asn186, Asn214, Asn233, Asn244, Asn313, Asn340, Asn368, Asn399, Asn406, and Asn411 each carry an N-linked (GlcNAc...) asparagine; by host glycan. The interval 446-466 is fusion peptide; sequence FGISAIVAAIVAATAIAASAT. N-linked (GlcNAc...) asparagine; by host glycosylation is found at Asn483 and Asn490. Residues 498-513 are immunosuppression; the sequence is LIERQIKILYAMILQT. 2 N-linked (GlcNAc...) asparagine; by host glycosylation sites follow: Asn550 and Asn557. Coiled coils occupy residues 576–624 and 663–699; these read ILTT…SIIK and KKFH…YYKQ. A helical membrane pass occupies residues 615-635; it reads IPGLGASIIKYIVMFLLIYLL. Residues 636-859 lie on the Cytoplasmic side of the membrane; the sequence is LTSSPKILRA…TSHVSMPQYV (224 aa).

In terms of assembly, the mature envelope protein (Env) consists of a trimer of SU-TM heterodimers attached by noncovalent interactions or by a labile interchain disulfide bond. In terms of processing, specific enzymatic cleavages in vivo yield mature proteins. Envelope glycoproteins are synthesized as an inactive precursor that is N-glycosylated and processed likely by host cell furin or by a furin-like protease in the Golgi to yield the mature SU and TM proteins. The cleavage site between SU and TM requires the minimal sequence [KR]-X-[KR]-R.

The protein resides in the virion membrane. Its subcellular location is the host cell membrane. In terms of biological role, the surface protein (SU) attaches the virus to the host cell by binding to its receptor. This interaction triggers the refolding of the transmembrane protein (TM) and is thought to activate its fusogenic potential by unmasking its fusion peptide. Fusion occurs at the host cell plasma membrane. The transmembrane protein (TM) acts as a class I viral fusion protein. Under the current model, the protein has at least 3 conformational states: pre-fusion native state, pre-hairpin intermediate state, and post-fusion hairpin state. During viral and target cell membrane fusion, the coiled coil regions (heptad repeats) assume a trimer-of-hairpins structure, positioning the fusion peptide in close proximity to the C-terminal region of the ectodomain. The formation of this structure appears to drive apposition and subsequent fusion of viral and target cell membranes. Membranes fusion leads to delivery of the nucleocapsid into the cytoplasm. The chain is Envelope glycoprotein (env) from Equus asinus (Donkey).